The sequence spans 549 residues: Polymorphic pseudokinase ROP5 (549 aa).

Positions 1–24 (MATKLARLATWLVLVGCLLWRAGA) are cleaved as a signal peptide. Residues 234–527 (LKLVEPLRVG…LEAMETPEFL (294 aa)) enclose the Protein kinase domain. Arg241, Asp244, Arg245, Ser246, Lys263, Met337, Pro338, Ala340, Asp343, and Asp393 together coordinate ATP. Asp244 contributes to the ADP binding site. Residues Ser246, Lys263, Met337, Pro338, and Ala340 each contribute to the ADP site. Asp393 contacts ADP. Positions 393 and 407 each coordinate Mg(2+). N-linked (GlcNAc...) asparagine glycosylation occurs at Asn434. Cys458 and Cys492 are joined by a disulfide.

The protein belongs to the protein kinase superfamily. Ser/Thr protein kinase family. As to quaternary structure, component of a complex at least composed of ROP18 and ROP5. Interacts with GRA7. Interacts with ROP17. Interacts with mouse IRGA6/IIGP1; the interaction results in inhibition of IRGA6/IIGP1 GTPase activity and/or oligomerization.

It is found in the secreted. Its subcellular location is the parasitophorous vacuole. It localises to the cytoplasmic vesicle. The protein localises to the secretory vesicle. The protein resides in the rhoptry. In terms of biological role, pseudokinase. Essential for virulence in the type I lineage. Mediates parasite survival in mouse monocytes. Required for the parasite ability to resist mouse innate immune effectors triggered by the IFN-gamma (IFNG). Reduces the accumulation of mouse IRGA6 (IIGP1) and IRGB6 (TGTP1/TGTP2), immunity-related GTPases (IRGs) that protect mice from infection by certain intracellular pathogens, on the parasitophorous vacuole and IRG-mediated killing of parasites by mouse cells. Regulates the activity of ROP18, an active kinase that targets IRGs to prevent IRG-mediated parasite killing by mouse cells. Acts as an allosteric inhibitor of mouse IRGA6 (IIGP1). Does not affect IFN-gamma (IFNG)-mediated parasite killing in human cells that do not possess the large variety of IRGs. In Toxoplasma gondii, this protein is Polymorphic pseudokinase ROP5.